Reading from the N-terminus, the 254-residue chain is Ribose-5-phosphate isomerase A (254 aa).

Residues 45 to 48, 105 to 108, and 118 to 121 each bind substrate; these read TGST, DGAD, and KGGG. Catalysis depends on Glu-127, which acts as the Proton acceptor. Lys-145 contributes to the substrate binding site.

It belongs to the ribose 5-phosphate isomerase family. As to quaternary structure, homodimer.

It catalyses the reaction aldehydo-D-ribose 5-phosphate = D-ribulose 5-phosphate. Its pathway is carbohydrate degradation; pentose phosphate pathway; D-ribose 5-phosphate from D-ribulose 5-phosphate (non-oxidative stage): step 1/1. Catalyzes the reversible conversion of ribose-5-phosphate to ribulose 5-phosphate. This Treponema pallidum subsp. pallidum (strain SS14) protein is Ribose-5-phosphate isomerase A.